A 276-amino-acid polypeptide reads, in one-letter code: Ribosomal RNA small subunit methyltransferase A (276 aa).

Positions 15, 17, 42, 64, 89, and 108 each coordinate S-adenosyl-L-methionine.

It belongs to the class I-like SAM-binding methyltransferase superfamily. rRNA adenine N(6)-methyltransferase family. RsmA subfamily.

It is found in the cytoplasm. The enzyme catalyses adenosine(1518)/adenosine(1519) in 16S rRNA + 4 S-adenosyl-L-methionine = N(6)-dimethyladenosine(1518)/N(6)-dimethyladenosine(1519) in 16S rRNA + 4 S-adenosyl-L-homocysteine + 4 H(+). In terms of biological role, specifically dimethylates two adjacent adenosines (A1518 and A1519) in the loop of a conserved hairpin near the 3'-end of 16S rRNA in the 30S particle. May play a critical role in biogenesis of 30S subunits. This Prochlorococcus marinus (strain MIT 9515) protein is Ribosomal RNA small subunit methyltransferase A.